Here is a 632-residue protein sequence, read N- to C-terminus: MNIRSNPQQTVPAVTTGPLSSSRKIFASPDAAPDLRVPLREIILSEGAGEPNLPVYDTSGPYTDPSVTIDVNAGLARSRKQWVLERGGVEEYEGRQVKPEDNGNLSTDKAARAFSAYHKPLRGLDGHKITQLEFARAGIITKEMIYVAARENLGRKEQLERAEAALADGESFGAEVPAFITPEFVRSEIARGRAIIPCNINHSELEPMIIGRNFLTKINANIGNSAVTSSVEEEVEKMVWAIRWGADTVMDLSTGRNIHTTREWILRNAPVPIGTVPIYQALEKCNGDPVKLTWELYKDTLIEQCEQGVDYFTIHAGVRLSYIHLTANRVTGIVSRGGSIMAKWCLAHHKESFLYTHFDEICDLMRKYDVSFSLGDGLRPGSIADANDRAQFAELETLGELTKIAWDKGCQVMIEGPGHVPMHKIKINMDKQLRECGEAPFYTLGPLTTDIAPGYDHITSGIGAAMIGWFGCAMLCYVTPKEHLGLPDRNDVKVGVITYKIAAHASDLAKGHPAAQLRDDALSRARFDFRWSDQFNLGLDPDTAKNFHDETLPKEAHKVAHFCSMCGPKFCSMKITQDVRDYAATLNDPNSIGMSLSGTAEDGMKQMSAKFKEMGSSVYLDAEKVKESNRVL.

The span at 1–23 shows a compositional bias: polar residues; it reads MNIRSNPQQTVPAVTTGPLSSSR. Positions 1 to 26 are disordered; it reads MNIRSNPQQTVPAVTTGPLSSSRKIF. Residues Asn-221, Met-250, Tyr-279, His-315, 335–337, 376–379, and Glu-415 each bind substrate; these read SRG and DGLR. Residue His-419 coordinates Zn(2+). Tyr-442 is a substrate binding site. Position 483 (His-483) interacts with Zn(2+). The [4Fe-4S] cluster site is built by Cys-563, Cys-566, and Cys-571.

This sequence belongs to the ThiC family. In terms of assembly, homodimer. [4Fe-4S] cluster is required as a cofactor.

The catalysed reaction is 5-amino-1-(5-phospho-beta-D-ribosyl)imidazole + S-adenosyl-L-methionine = 4-amino-2-methyl-5-(phosphooxymethyl)pyrimidine + CO + 5'-deoxyadenosine + formate + L-methionine + 3 H(+). The protein operates within cofactor biosynthesis; thiamine diphosphate biosynthesis. Catalyzes the synthesis of the hydroxymethylpyrimidine phosphate (HMP-P) moiety of thiamine from aminoimidazole ribotide (AIR) in a radical S-adenosyl-L-methionine (SAM)-dependent reaction. The protein is Phosphomethylpyrimidine synthase of Bradyrhizobium diazoefficiens (strain JCM 10833 / BCRC 13528 / IAM 13628 / NBRC 14792 / USDA 110).